We begin with the raw amino-acid sequence, 379 residues long: UDP-4-amino-4-deoxy-L-arabinose--oxoglutarate aminotransferase (379 aa).

Residue Lys182 is modified to N6-(pyridoxal phosphate)lysine.

This sequence belongs to the DegT/DnrJ/EryC1 family. ArnB subfamily. As to quaternary structure, homodimer. It depends on pyridoxal 5'-phosphate as a cofactor.

It carries out the reaction UDP-4-amino-4-deoxy-beta-L-arabinose + 2-oxoglutarate = UDP-beta-L-threo-pentopyranos-4-ulose + L-glutamate. It functions in the pathway nucleotide-sugar biosynthesis; UDP-4-deoxy-4-formamido-beta-L-arabinose biosynthesis; UDP-4-deoxy-4-formamido-beta-L-arabinose from UDP-alpha-D-glucuronate: step 2/3. It participates in bacterial outer membrane biogenesis; lipopolysaccharide biosynthesis. Its function is as follows. Catalyzes the conversion of UDP-4-keto-arabinose (UDP-Ara4O) to UDP-4-amino-4-deoxy-L-arabinose (UDP-L-Ara4N). The modified arabinose is attached to lipid A and is required for resistance to polymyxin and cationic antimicrobial peptides. The polypeptide is UDP-4-amino-4-deoxy-L-arabinose--oxoglutarate aminotransferase (Salmonella agona (strain SL483)).